The chain runs to 85 residues: Putative sodium channel toxin Ts37 (85 aa).

A signal peptide spans Met-1–Gly-20. The 62-residue stretch at Arg-22 to Arg-83 folds into the LCN-type CS-alpha/beta domain. 4 cysteine pairs are disulfide-bonded: Cys-32–Cys-82, Cys-36–Cys-59, Cys-45–Cys-64, and Cys-49–Cys-66.

It belongs to the long (4 C-C) scorpion toxin superfamily. Sodium channel inhibitor family. Expressed by the venom gland.

The protein resides in the secreted. Its function is as follows. Putative sodium channel toxin. The protein is Putative sodium channel toxin Ts37 of Tityus serrulatus (Brazilian scorpion).